Reading from the N-terminus, the 98-residue chain is NADH-ubiquinone oxidoreductase chain 4L (98 aa).

3 helical membrane-spanning segments follow: residues 1–21 (MSPV…GLAF), 26–46 (LLSA…AIAL), and 61–81 (MILL…LVAA).

The protein belongs to the complex I subunit 4L family.

Its subcellular location is the mitochondrion membrane. It carries out the reaction a ubiquinone + NADH + 5 H(+)(in) = a ubiquinol + NAD(+) + 4 H(+)(out). Functionally, core subunit of the mitochondrial membrane respiratory chain NADH dehydrogenase (Complex I) which catalyzes electron transfer from NADH through the respiratory chain, using ubiquinone as an electron acceptor. Part of the enzyme membrane arm which is embedded in the lipid bilayer and involved in proton translocation. In Squalus acanthias (Spiny dogfish), this protein is NADH-ubiquinone oxidoreductase chain 4L (MT-ND4L).